We begin with the raw amino-acid sequence, 287 residues long: Pyridoxal kinase PdxY (287 aa).

Substrate contacts are provided by residues Ser-10 and 45–46 (TQ). Residues Asp-112, Ala-144, Glu-149, Lys-182, and 209 to 212 (RPLV) each bind ATP. Residue Asp-224 participates in substrate binding.

The protein belongs to the pyridoxine kinase family. PdxY subfamily. Homodimer. Mg(2+) serves as cofactor.

It catalyses the reaction pyridoxal + ATP = pyridoxal 5'-phosphate + ADP + H(+). It functions in the pathway cofactor metabolism; pyridoxal 5'-phosphate salvage; pyridoxal 5'-phosphate from pyridoxal: step 1/1. Pyridoxal kinase involved in the salvage pathway of pyridoxal 5'-phosphate (PLP). Catalyzes the phosphorylation of pyridoxal to PLP. The protein is Pyridoxal kinase PdxY of Shigella boydii serotype 4 (strain Sb227).